The sequence spans 171 residues: uncharacterized protein (171 aa).

The signal sequence occupies residues Met1–Ala20.

This is an uncharacterized protein from Aquifex aeolicus (strain VF5).